A 274-amino-acid chain; its full sequence is Penicillin-insensitive murein endopeptidase (274 aa).

A signal peptide spans 1–19 (MKKTAIALLAWFVSSASLA). Disulfide bonds link cysteine 44-cysteine 265, cysteine 187-cysteine 235, and cysteine 216-cysteine 223. Zn(2+)-binding residues include histidine 110, histidine 113, aspartate 120, aspartate 147, histidine 150, and histidine 211. The tract at residues 225-274 (DQPLPPPGDGCGAELQSWFEPPKPGTTKPEKKTPPPLPPSCQALLDEHVL) is disordered.

Belongs to the peptidase M74 family. As to quaternary structure, dimer. It depends on Zn(2+) as a cofactor.

It localises to the periplasm. In terms of biological role, murein endopeptidase that cleaves the D-alanyl-meso-2,6-diamino-pimelyl amide bond that connects peptidoglycan strands. Likely plays a role in the removal of murein from the sacculus. The chain is Penicillin-insensitive murein endopeptidase from Salmonella arizonae (strain ATCC BAA-731 / CDC346-86 / RSK2980).